The sequence spans 342 residues: Nicotinate-nucleotide--dimethylbenzimidazole phosphoribosyltransferase (342 aa).

The active-site Proton acceptor is Glu311.

Belongs to the CobT family.

It catalyses the reaction 5,6-dimethylbenzimidazole + nicotinate beta-D-ribonucleotide = alpha-ribazole 5'-phosphate + nicotinate + H(+). It participates in nucleoside biosynthesis; alpha-ribazole biosynthesis; alpha-ribazole from 5,6-dimethylbenzimidazole: step 1/2. Its function is as follows. Catalyzes the synthesis of alpha-ribazole-5'-phosphate from nicotinate mononucleotide (NAMN) and 5,6-dimethylbenzimidazole (DMB). The sequence is that of Nicotinate-nucleotide--dimethylbenzimidazole phosphoribosyltransferase from Photobacterium profundum (strain SS9).